The sequence spans 436 residues: tRNA pseudouridine synthase Pus10 (436 aa).

Asp254 acts as the Nucleophile in catalysis. Substrate-binding residues include Tyr322 and Tyr394.

It belongs to the pseudouridine synthase Pus10 family.

The catalysed reaction is uridine(54) in tRNA = pseudouridine(54) in tRNA. The enzyme catalyses uridine(55) in tRNA = pseudouridine(55) in tRNA. Responsible for synthesis of pseudouridine from uracil-54 and uracil-55 in the psi GC loop of transfer RNAs. The protein is tRNA pseudouridine synthase Pus10 of Methanopyrus kandleri (strain AV19 / DSM 6324 / JCM 9639 / NBRC 100938).